Consider the following 181-residue polypeptide: Diphosphoinositol polyphosphate phosphohydrolase NUDT4B (181 aa).

Residues arginine 10, 18–20 (KKR), and 39–41 (SSR) each bind substrate. One can recognise a Nudix hydrolase domain in the interval 18 to 145 (KKRAACLCFR…VHAEYLEKLK (128 aa)). Residues glycine 50 and glutamate 66 each contribute to the Mg(2+) site. Residues 51 to 72 (GGMEPEEEPGGAAVREVYEEAG) carry the Nudix box motif. Glutamate 69 serves as the catalytic Proton acceptor. Glutamate 70 is a Mg(2+) binding site. Residues 90–92 (RKH), arginine 116, and lysine 134 each bind substrate.

The protein belongs to the Nudix hydrolase family. DIPP subfamily. The cofactor is Mg(2+). It depends on Mn(2+) as a cofactor.

The protein resides in the cytoplasm. It carries out the reaction diphospho-myo-inositol polyphosphate + H2O = myo-inositol polyphosphate + phosphate.. Functionally, cleaves a beta-phosphate from the diphosphate groups in PP-InsP5 (diphosphoinositol pentakisphosphate), PP-InsP4 and [PP]2-InsP4 (bisdiphosphoinositol tetrakisphosphate), suggesting that it may play a role in signal transduction. Also able to catalyze the hydrolysis of dinucleoside oligophosphate Ap6A, but not Ap5A. The major reaction products are ADP and p4a from Ap6A. Also able to hydrolyze 5-phosphoribose 1-diphosphate. Does not play a role in U8 snoRNA decapping activity. Binds U8 snoRNA. The sequence is that of Diphosphoinositol polyphosphate phosphohydrolase NUDT4B from Homo sapiens (Human).